We begin with the raw amino-acid sequence, 280 residues long: Purine nucleoside phosphorylase (280 aa).

Phosphate contacts are provided by residues Ser-15 and 55 to 56 (RH). Met-194 serves as a coordination point for substrate. Position 195 (Thr-195) interacts with phosphate. 218–220 (DLD) lines the substrate pocket.

This sequence belongs to the PNP/MTAP phosphorylase family. MTAP subfamily. Homohexamer. Dimer of a homotrimer.

It catalyses the reaction a purine D-ribonucleoside + phosphate = a purine nucleobase + alpha-D-ribose 1-phosphate. The protein operates within purine metabolism; purine nucleoside salvage. Functionally, purine nucleoside phosphorylase involved in purine salvage. The chain is Purine nucleoside phosphorylase from Streptomyces coelicolor (strain ATCC BAA-471 / A3(2) / M145).